The following is a 300-amino-acid chain: Inosose dehydratase (300 aa).

This sequence belongs to the IolE/MocC family. Requires glutathione as cofactor. It depends on Co(2+) as a cofactor. The cofactor is Mn(2+).

It catalyses the reaction scyllo-inosose = 3D-3,5/4-trihydroxycyclohexane-1,2-dione + H2O. It functions in the pathway polyol metabolism; myo-inositol degradation into acetyl-CoA; acetyl-CoA from myo-inositol: step 2/7. In terms of biological role, catalyzes the dehydration of inosose (2-keto-myo-inositol, 2KMI or 2,4,6/3,5-pentahydroxycyclohexanone) to 3D-(3,5/4)-trihydroxycyclohexane-1,2-dione (D-2,3-diketo-4-deoxy-epi-inositol). The chain is Inosose dehydratase from Bacillus licheniformis (strain ATCC 14580 / DSM 13 / JCM 2505 / CCUG 7422 / NBRC 12200 / NCIMB 9375 / NCTC 10341 / NRRL NRS-1264 / Gibson 46).